Consider the following 96-residue polypeptide: MVKIRLARGGAKKKPFYSIVATDSRRRRDSAYIERLGYFNPVTHGQEVRLIIEEARLAYWTSKGAQISDRVKQLVKEFKDPLIRERDIAVKSAKNL.

This sequence belongs to the bacterial ribosomal protein bS16 family.

In Vesicomyosocius okutanii subsp. Calyptogena okutanii (strain HA), this protein is Small ribosomal subunit protein bS16.